The sequence spans 239 residues: UPF0126 membrane protein VC_2382 (239 aa).

6 helical membrane passes run 38–58 (LLYLIDMFGTAVFAVSGVLLA), 62–82 (KMDPFGVMVLASVTAIGGGTI), 86–106 (ALGATPVFWIKDTNYLWVIMI), 122–142 (AWWILPVCDAIGLAVFVGIGV), 153–173 (LIAIIMGVITGCGGGIIRDVL), and 185–205 (VYATACIIGGIFHTTALAMGY).

This sequence belongs to the UPF0126 family.

Its subcellular location is the cell membrane. This Vibrio cholerae serotype O1 (strain ATCC 39315 / El Tor Inaba N16961) protein is UPF0126 membrane protein VC_2382.